A 400-amino-acid chain; its full sequence is MRIEPIIQGVVARSAHPFGCEAAIKKQIAFVKNAPQISQGPKRVLILGASSGFGLAARIALTFGGAQADTIGVSFERGPSEKGTGSAGWYNNVFFKREAEKEGRIAINIVGDAFASETRTQVIEAIETYFEGEVDLVIYSLATGMRPISNQPGEFWRSVIKPFGQTVTGASFDLEHDRWIDTTLESATEEEALHTIKVMGGEDWESWIDTLINAESIAQGCQTIAFSYVGPEITHPIYLDGTLGRAKIDLHQTSHSLNLKLANFDGAAYATVCKALVTKASVFIPALSPYLLALYRVMKDEKCHEGCIEQMQRLFATKLYGQDHISVDGERLVRMDDWELAPHIQNKVNQILEEMDANNFQVIGDYQGFKNEFLQLNGFGFDEVDYSQDIDLQTILKLTP.

Residues 48–53, 75–76, 112–113, and 141–142 each bind NAD(+); these read GASSGF, FE, DA, and LA. Residue Tyr-228 participates in substrate binding. Residue Tyr-238 is the Proton donor of the active site. NAD(+)-binding positions include Lys-247 and 276–278; that span reads LVT.

This sequence belongs to the TER reductase family. In terms of assembly, monomer.

It carries out the reaction a 2,3-saturated acyl-[ACP] + NAD(+) = a (2E)-enoyl-[ACP] + NADH + H(+). It functions in the pathway lipid metabolism; fatty acid biosynthesis. Functionally, involved in the final reduction of the elongation cycle of fatty acid synthesis (FAS II). Catalyzes the reduction of a carbon-carbon double bond in an enoyl moiety that is covalently linked to an acyl carrier protein (ACP). This Vibrio vulnificus (strain CMCP6) protein is Enoyl-[acyl-carrier-protein] reductase [NADH] 2.